A 362-amino-acid polypeptide reads, in one-letter code: Histidine protein methyltransferase 1 homolog (362 aa).

The interval T18–K88 is disordered. Over residues Q30–W51 the composition is skewed to basic and acidic residues. A compositionally biased stretch (polar residues) spans K52 to T65. Residues S62 and S67 each carry the phosphoserine modification. Residues D73–K82 are compositionally biased toward basic and acidic residues. At H144 the chain carries Tele-methylhistidine. S-adenosyl-L-methionine-binding positions include I158–T162, G185, and Q206–Y208. The Nuclear localization signal motif lies at P237–R243. S-adenosyl-L-methionine is bound by residues G259–W261 and S283.

The protein belongs to the methyltransferase superfamily. METTL18 family. In terms of assembly, interacts with GRWD1 and members of the heat shock protein 90 and 70 families; these proteins may possibly be methylation substrates for the enzyme. In terms of processing, monomethylated at His-144 through automethylation. Automethylation at His-144 positively regulates the methyltransferase activity toward RPL3. Probably methylated on other residues.

It localises to the cytoplasm. It is found in the cytosol. The protein localises to the nucleus. The protein resides in the nucleolus. It catalyses the reaction L-histidyl-[protein] + S-adenosyl-L-methionine = N(tele)-methyl-L-histidyl-[protein] + S-adenosyl-L-homocysteine + H(+). Functionally, protein-L-histidine N-tele-methyltransferase that specifically monomethylates RPL3, thereby regulating translation elongation. Histidine methylation of RPL3 regulates translation elongation by slowing ribosome traversal on tyrosine codons: slower elongation provides enough time for proper folding of synthesized proteins and prevents cellular aggregation of tyrosine-rich proteins. In Mus musculus (Mouse), this protein is Histidine protein methyltransferase 1 homolog.